The chain runs to 103 residues: Large ribosomal subunit protein eL14 (103 aa).

This sequence belongs to the eukaryotic ribosomal protein eL14 family.

This Pyrobaculum neutrophilum (strain DSM 2338 / JCM 9278 / NBRC 100436 / V24Sta) (Thermoproteus neutrophilus) protein is Large ribosomal subunit protein eL14.